Reading from the N-terminus, the 951-residue chain is Coiled-coil domain-containing protein 15 (951 aa).

Coiled-coil stretches lie at residues 64-89, 154-193, 782-813, and 839-874; these read LIEE…QVKY, DGIE…VIKK, MDIE…EQEC, and LAQL…IQEK.

Interacts with POC5, POC1B, CETN2 and FAM161A.

Its subcellular location is the cytoplasm. It is found in the cytoskeleton. The protein resides in the microtubule organizing center. The protein localises to the centrosome. It localises to the centriole. Its subcellular location is the centriolar satellite. Its function is as follows. Plays an important role in primary cilium assembly, maintenance, and length regulation. Interacts with centriole inner scaffold proteins to promote proper centriole size and integrity and assembly of functional cilia. Required for the recruitment of both the inner scaffold protein POC1B and the distal SFI1/CETN2 complex to centrioles. The polypeptide is Coiled-coil domain-containing protein 15 (CCDC15) (Homo sapiens (Human)).